Reading from the N-terminus, the 412-residue chain is Trehalose synthase (412 aa).

This sequence belongs to the glycosyltransferase group 1 family. Glycosyltransferase 4 subfamily. As to quaternary structure, homodimer. Mg(2+) serves as cofactor.

The enzyme catalyses an NDP-alpha-D-glucose + D-glucose = alpha,alpha-trehalose + a ribonucleoside 5'-diphosphate + H(+). Functionally, synthesizes trehalose from ADP-glucose and glucose. Has a much lower activity toward UDP-glucose and GDP-glucose. The reaction is reversible, the equilibrium strongly favors trehalose synthesis. The protein is Trehalose synthase of Pyrococcus furiosus (strain ATCC 43587 / DSM 3638 / JCM 8422 / Vc1).